The sequence spans 155 residues: uncharacterized protein (155 aa).

A run of 4 helical transmembrane segments spans residues 25–45 (LPMG…FGWT), 50–70 (IFWF…IMTS), 91–111 (GVKI…ESLF), and 118–138 (WGCT…PILF).

The protein belongs to the major facilitator superfamily. CAR1 family.

The protein resides in the membrane. This is an uncharacterized protein from Schizosaccharomyces pombe (strain 972 / ATCC 24843) (Fission yeast).